Reading from the N-terminus, the 502-residue chain is Calnexin homolog (502 aa).

The N-terminal stretch at 1–19 (MKFSAYLWWLFLNLALVKG) is a signal peptide. Over 20 to 481 (TSLLSNVTLA…IDRILEQPLK (462 aa)) the chain is Lumenal. N-linked (GlcNAc...) asparagine glycans are attached at residues Asn25 and Asn104. An intrachain disulfide couples Cys125 to Cys161. The an alpha-D-glucoside site is built by Lys131 and Asp159. The interval 248–381 (IPDVSVAKPH…PEIENPLYYE (134 aa)) is p domain (Extended arm). 5 consecutive repeat copies span residues 250–261 (DVSVAKPHDWDD), 267–278 (DPEAVKLSDRDE), 286–297 (HPDGTEPPEWNS), 305–316 (DPNAQKPSWWKE), and 320–330 (GEWIPPMIKNP). 4 X approximate repeats regions lie at residues 250–316 (DVSV…WWKE) and 320–377 (GEWI…IENP). Residue Asn296 is glycosylated (N-linked (GlcNAc...) asparagine). Cys332 and Cys338 are disulfide-bonded. 3 repeat units span residues 339 to 349 (GQQIPGLINNA), 353 to 363 (GPGELNEIINP), and 367 to 377 (GEWHPPEIENP). Residue Glu398 coordinates an alpha-D-glucoside. Residues Asn416 and Asn425 are each glycosylated (N-linked (GlcNAc...) asparagine). A helical transmembrane segment spans residues 482-502 (FVLTAAVVLLTTSVLCCVVFT).

The protein belongs to the calreticulin family. As to quaternary structure, interacts with MPD1.

The protein resides in the endoplasmic reticulum membrane. Functionally, interacts with newly synthesized monoglucosylated glycoproteins in the endoplasmic reticulum. It may act in assisting protein assembly and/or in the retention within the ER of unassembled protein subunits. It seems to play a major role in the quality control apparatus of the ER by the retention of incorrectly folded proteins. This chain is Calnexin homolog (CNE1), found in Saccharomyces cerevisiae (strain ATCC 204508 / S288c) (Baker's yeast).